Reading from the N-terminus, the 420-residue chain is MIOREX complex component 9 (420 aa).

2 helical membrane-spanning segments follow: residues 125-145 (VYKV…TFIL) and 149-169 (IVVI…FFFF).

As to quaternary structure, associates with the mitochondrial ribosome.

Its subcellular location is the mitochondrion. The protein localises to the mitochondrion membrane. Functionally, component of MIOREX complexes, large expressome-like assemblies of ribosomes with factors involved in all the steps of post-transcriptional gene expression. In Saccharomyces cerevisiae (strain ATCC 204508 / S288c) (Baker's yeast), this protein is MIOREX complex component 9.